The primary structure comprises 23 residues: Aurein-4.3 (23 aa).

Belongs to the frog skin active peptide (FSAP) family. Aurein subfamily. As to expression, expressed by the skin dorsal glands.

Its subcellular location is the secreted. In terms of biological role, has no antimicrobial or anticancer activity. This chain is Aurein-4.3, found in Ranoidea aurea (Green and golden bell frog).